The following is a 130-amino-acid chain: Small ribosomal subunit protein uS9 (130 aa).

A disordered region spans residues 99-130 (KSAGMLTRDPRMKERKKPGLKKARKASQFSKR). Positions 111–130 (KERKKPGLKKARKASQFSKR) are enriched in basic residues.

This sequence belongs to the universal ribosomal protein uS9 family.

This chain is Small ribosomal subunit protein uS9, found in Latilactobacillus sakei subsp. sakei (strain 23K) (Lactobacillus sakei subsp. sakei).